Consider the following 486-residue polypeptide: Aromatic-L-amino-acid decarboxylase (486 aa).

At methionine 1 the chain carries N-acetylmethionine. A run of 2 repeats spans residues 58–115 (QDVE…TELE) and 118–178 (MMDW…TQGA). A 2 X approximate tandem repeats region spans residues 58–178 (QDVEKIIMPG…AASPGLTQGA (121 aa)). Position 82 (threonine 82) interacts with substrate. Pyridoxal 5'-phosphate contacts are provided by alanine 148 and serine 149. Histidine 192 lines the substrate pocket. Residues threonine 246 and asparagine 300 each contribute to the pyridoxal 5'-phosphate site. N6-(pyridoxal phosphate)lysine is present on lysine 303.

Belongs to the group II decarboxylase family. As to quaternary structure, homodimer. Pyridoxal 5'-phosphate is required as a cofactor.

The catalysed reaction is L-dopa + H(+) = dopamine + CO2. It carries out the reaction 5-hydroxy-L-tryptophan + H(+) = serotonin + CO2. Its pathway is catecholamine biosynthesis; dopamine biosynthesis; dopamine from L-tyrosine: step 2/2. Functionally, catalyzes the decarboxylation of L-3,4-dihydroxyphenylalanine (DOPA) to dopamine and L-5-hydroxytryptophan to serotonin. The sequence is that of Aromatic-L-amino-acid decarboxylase (DDC) from Sus scrofa (Pig).